The primary structure comprises 356 residues: Protein MGF 360-3L (356 aa).

Residues 61–93 form an ANK repeat; it reads KLNTALVLAVKENNDDLIMLFTEWGANINYGLL.

The protein belongs to the asfivirus MGF 360 family.

Its function is as follows. Plays a role in virus cell tropism, and may be required for efficient virus replication in macrophages. This Ornithodoros (relapsing fever ticks) protein is Protein MGF 360-3L.